A 412-amino-acid polypeptide reads, in one-letter code: MDWDAKMPSWDLGTVVGPSGGGGGGGGGGGALDLKLGAPTSWKTTTTVSAASAAPAAVAPPPPPPASSSSSAAAAGKRARAGQGQQAAVPACSVEGCAADLSKCVRDYHRRHKVCEAHSKTAVVTVAGQQQRFCQQCSRFHLLGEFDEEKRSCRKRLDGHNKRRRKPQPDPLNPGNLFANHHGAARFTSYPQIFSTAASMSPQETKWPANVVKTEAADVFQEPYYHALHLNGAGAAAAASIFHHGGNKARKHHFPFLTADHGGGAAAASPLFGCQPFTITPSSESRSSSSSRHSNGKMFAHDGGLDNCALSLLSDNPTPTAQITIPQPLFAGGGQYGGGGGGDVSLTGLSYVRMAGKDTSILAKSATTTATTATTPTTTSAQLQYHGYYHHHVSADQGSSDAAIQALPFSSW.

Positions 1 to 81 are disordered; sequence MDWDAKMPSW…AAAAGKRARA (81 aa). The segment covering 18 to 31 has biased composition (gly residues); sequence PSGGGGGGGGGGGA. Composition is skewed to low complexity over residues 48–57 and 67–81; these read VSAASAAPAA and SSSS…RARA. Residues 89-167 form an SBP-type zinc finger; the sequence is VPACSVEGCA…DGHNKRRRKP (79 aa). Residues Cys-92, Cys-97, Cys-115, His-118, Cys-134, Cys-137, His-141, and Cys-153 each contribute to the Zn(2+) site. The Bipartite nuclear localization signal signature appears at 150–166; sequence KRSCRKRLDGHNKRRRK.

In terms of tissue distribution, expressed in stems, leaf sheaths, and young panicles.

It localises to the nucleus. In terms of biological role, trans-acting factor that binds specifically to the consensus nucleotide sequence 5'-TNCGTACAA-3'. May be involved in panicle development. The protein is Squamosa promoter-binding-like protein 2 (SPL2) of Oryza sativa subsp. japonica (Rice).